The sequence spans 497 residues: Cytoplasmic dynein 1 light intermediate chain 2 (497 aa).

61 to 68 (GEDGSGKT) contacts ATP. 4 disordered regions span residues 187–206 (PEEG…SGSD), 366–408 (QQES…IKNN), 423–461 (LSKK…TEQC), and 474–497 (QEEL…ENEA). Residues Ser194, Ser369, and Ser377 each carry the phosphoserine modification. The residue at position 383 (Arg383) is an Omega-N-methylarginine. Over residues 423 to 444 (LSKKTGSPGSPSAGGVQSTAKK) the composition is skewed to polar residues. Thr427 carries the post-translational modification Phosphothreonine. A phosphoserine mark is found at Ser429 and Ser432. The segment covering 476 to 485 (ELDRMTRKPD) has biased composition (basic and acidic residues). The span at 487-497 (MVTNSSTENEA) shows a compositional bias: polar residues.

It belongs to the dynein light intermediate chain family. As to quaternary structure, homodimer. The cytoplasmic dynein 1 complex consists of two catalytic heavy chains (HCs) and a number of non-catalytic subunits presented by intermediate chains (ICs), light intermediate chains (LICs) and light chains (LCs); the composition seems to vary in respect to the IC, LIC and LC composition. The heavy chain homodimer serves as a scaffold for the probable homodimeric assembly of the respective non-catalytic subunits. The ICs and LICs bind directly to the HC dimer and the LCs assemble on the IC dimer. Self-associates. Interacts with DYNC1H1; DYNC1LI1 and DYNC1LI2 bind mutually exclusive to DYNC1H1. In terms of tissue distribution, ubiquitous.

The protein localises to the cytoplasm. It is found in the cytoskeleton. In terms of biological role, acts as one of several non-catalytic accessory components of the cytoplasmic dynein 1 complex that are thought to be involved in linking dynein to cargos and to adapter proteins that regulate dynein function. Cytoplasmic dynein 1 acts as a motor for the intracellular retrograde motility of vesicles and organelles along microtubules. May play a role in binding dynein to membranous organelles or chromosomes. The polypeptide is Cytoplasmic dynein 1 light intermediate chain 2 (Dync1li2) (Rattus norvegicus (Rat)).